A 385-amino-acid chain; its full sequence is Enoyl-[acyl-carrier-protein] reductase, mitochondrial (385 aa).

The active-site Proton donor is the Tyr-78. Residues Asn-162, 190–193, 213–215, 288–291, 313–315, and Lys-378 each bind NADP(+); these read TSGV, RDR, YGGM, and YWV.

This sequence belongs to the zinc-containing alcohol dehydrogenase family. Quinone oxidoreductase subfamily. In terms of assembly, homodimer.

Its subcellular location is the mitochondrion matrix. The catalysed reaction is a 2,3-saturated acyl-[ACP] + NADP(+) = a (2E)-enoyl-[ACP] + NADPH + H(+). Functionally, catalyzes the NADPH-dependent reduction of trans-2-enoyl thioesters in mitochondrial fatty acid synthesis (fatty acid synthesis type II). Fatty acid chain elongation in mitochondria uses acyl carrier protein (ACP) as an acyl group carrier, but the enzyme accepts both ACP and CoA thioesters as substrates in vitro. Required for respiration and the maintenance of the mitochondrial compartment. The chain is Enoyl-[acyl-carrier-protein] reductase, mitochondrial (ETR1) from Candida glabrata (strain ATCC 2001 / BCRC 20586 / JCM 3761 / NBRC 0622 / NRRL Y-65 / CBS 138) (Yeast).